The chain runs to 498 residues: MSTSKSENYLSELRKIIWPIEQHENKKFLPLAFMMFCILLNYSTLRSIKDGFVVTDIGTESISFLKTYIVLPSAVIAMVIYVKLCDILKQENIFYVITSFFLGYFALFAFVLYPYPDLVHPDHKTIESLSLAYPNFKWFIKIVGKWSFASFYTIAELWGTMMLSLLFWQFANQITKITEAKRFYSMFGLLANLALPVTSVVIGYFLHEKTQIVSEHLKFIPLFVIMITSSFLIILTYRWMNKNVLTDPRLYDPTLVKEKKAKAKLSFIESFKMIFTSKYVGYIALLIIAYGVSVNLVEGVWKSKVKELYPTKEAYTIYMGQFQFYQGWVAIAFMLIGSNILRKVSWLTAAMITPLMMFITGAAFFSFIFFDSVIAMNLTGILASSPLTLAVMFGMIQNVLSKGVKYSLFDATKNMAYIPLDKDLRVKGQAAVEVIGGRLGKSGGAIIQSTFFILFPAFGFIEATPYFASIFFIIVILWIFAVKGLNKEYQVLVNKNEN.

At 1–33 (MSTSKSENYLSELRKIIWPIEQHENKKFLPLAF) the chain is on the cytoplasmic side. A helical membrane pass occupies residues 34-54 (MMFCILLNYSTLRSIKDGFVV). A disulfide bridge links cysteine 37 with cysteine 85. Residues 55-67 (TDIGTESISFLKT) lie on the Extracellular side of the membrane. A helical membrane pass occupies residues 68–88 (YIVLPSAVIAMVIYVKLCDIL). At 89-92 (KQEN) the chain is on the cytoplasmic side. Residues 93–113 (IFYVITSFFLGYFALFAFVLY) form a helical membrane-spanning segment. The Extracellular portion of the chain corresponds to 114 to 147 (PYPDLVHPDHKTIESLSLAYPNFKWFIKIVGKWS). Residues 148–168 (FASFYTIAELWGTMMLSLLFW) traverse the membrane as a helical segment. Over 169 to 184 (QFANQITKITEAKRFY) the chain is Cytoplasmic. A helical transmembrane segment spans residues 185 to 205 (SMFGLLANLALPVTSVVIGYF). At 206-218 (LHEKTQIVSEHLK) the chain is on the extracellular side. A helical membrane pass occupies residues 219-239 (FIPLFVIMITSSFLIILTYRW). The Cytoplasmic segment spans residues 240–279 (MNKNVLTDPRLYDPTLVKEKKAKAKLSFIESFKMIFTSKY). Residues 280–300 (VGYIALLIIAYGVSVNLVEGV) traverse the membrane as a helical segment. Over 301 to 320 (WKSKVKELYPTKEAYTIYMG) the chain is Extracellular. The helical transmembrane segment at 321–341 (QFQFYQGWVAIAFMLIGSNIL) threads the bilayer. Residues 342 to 348 (RKVSWLT) lie on the Cytoplasmic side of the membrane. Residues 349-369 (AAMITPLMMFITGAAFFSFIF) traverse the membrane as a helical segment. Over 370–379 (FDSVIAMNLT) the chain is Extracellular. Residues 380–400 (GILASSPLTLAVMFGMIQNVL) form a helical membrane-spanning segment. Residues 401–438 (SKGVKYSLFDATKNMAYIPLDKDLRVKGQAAVEVIGGR) are Cytoplasmic-facing. Residue 436–442 (GGRLGKS) participates in ATP binding. A helical membrane pass occupies residues 439–459 (LGKSGGAIIQSTFFILFPAFG). The Extracellular portion of the chain corresponds to 460–465 (FIEATP). A helical membrane pass occupies residues 466–486 (YFASIFFIIVILWIFAVKGLN). The Cytoplasmic segment spans residues 487–498 (KEYQVLVNKNEN).

The protein belongs to the ADP/ATP translocase tlc family.

It is found in the cell membrane. In terms of biological role, provides the rickettsial cell with host ATP in exchange for rickettsial ADP. This is an obligate exchange system. This energy acquiring activity is an important component of rickettsial parasitism. This Rickettsia typhi (strain ATCC VR-144 / Wilmington) protein is ADP,ATP carrier protein 1 (tlcA).